The primary structure comprises 438 residues: Adenosylhomocysteinase (438 aa).

Substrate contacts are provided by T64, D139, and E164. 165-167 (TTT) contributes to the NAD(+) binding site. Substrate is bound by residues K194 and D198. Residues N199, 228–233 (GYGDVG), E251, N286, 307–309 (IGH), and N352 each bind NAD(+).

It belongs to the adenosylhomocysteinase family. The cofactor is NAD(+).

It localises to the cytoplasm. The catalysed reaction is S-adenosyl-L-homocysteine + H2O = L-homocysteine + adenosine. It functions in the pathway amino-acid biosynthesis; L-homocysteine biosynthesis; L-homocysteine from S-adenosyl-L-homocysteine: step 1/1. May play a key role in the regulation of the intracellular concentration of adenosylhomocysteine. The protein is Adenosylhomocysteinase of Coxiella burnetii (strain RSA 493 / Nine Mile phase I).